Consider the following 216-residue polypeptide: MFNEVHSSHGHTLLLITKPSLQATALLQHLKQSLAITGKLHNIQRSLEDISAGCIVLMDMMEADKKLIHYWQDNLSRKNNNIKTLLLNTPDDYPYREIENWPHINGVFYATEDQEHVVSGLQGILRGECYFSQKLASYLITHSGNYRYNSTESALLTHREKEILNKLRIGASNNEIARSLFISENTVKTHLYNLFKKIAVKNRTQAVSWANDNLRR.

One can recognise an HTH luxR-type domain in the interval 149-214 (NSTESALLTH…QAVSWANDNL (66 aa)). A DNA-binding region (H-T-H motif) is located at residues 173-192 (NNEIARSLFISENTVKTHLY).

The master regulator for adhesive curli fimbriae expression; necessary for transcription of the csgAB operon. Plays a positive role in biofilm formation. The protein is Probable csgAB operon transcriptional regulatory protein of Salmonella typhimurium (strain LT2 / SGSC1412 / ATCC 700720).